A 308-amino-acid chain; its full sequence is Very-long-chain enoyl-CoA reductase (308 aa).

Over 1 to 86 the chain is Cytoplasmic; the sequence is MKHYEVEILD…YFRDLGAQIS (86 aa). Lys22 carries the N6-acetyllysine modification. Ser58 bears the Phosphoserine mark. Lys60 carries the post-translational modification N6-acetyllysine. A helical membrane pass occupies residues 87 to 106; that stretch reads WVTVFLTEYAGPLFIYLLFY. Residues 107–124 are Lumenal-facing; that stretch reads FRVPFIYGRKYDFTSSRH. A helical transmembrane segment spans residues 125 to 147; sequence TVVHLACICHSFHYIKRLLETLF. At 148–158 the chain is on the cytoplasmic side; the sequence is VHRFSHGTMPL. Residues 159-180 form a helical membrane-spanning segment; sequence RNIFKNCTYYWGFAAWMAYYIN. Over 181–189 the chain is Lumenal; that stretch reads HPLYTPPTY. Residues 190-216 traverse the membrane as a helical segment; the sequence is GAQQVKLALAIFVICQLGNFSIHMALR. Residues 217 to 245 are Cytoplasmic-facing; that stretch reads DLRPAGSKTRKIPYPTRNPFTWLFLLVSC. Residues 246 to 262 traverse the membrane as a helical segment; it reads PNYTYEVGSWIGFAIMT. Residues 263–264 lie on the Lumenal side of the membrane; the sequence is QC. Residues 265–292 traverse the membrane as a helical segment; the sequence is LPVALFSLVGFTQMTIWAKGKHRSYLKE. Topologically, residues 293–308 are cytoplasmic; the sequence is FRDYPPLRMPIIPFLL.

It belongs to the steroid 5-alpha reductase family. Interacts with ELOVL1 and LASS2. Glycosylated.

It localises to the endoplasmic reticulum membrane. It catalyses the reaction a very-long-chain 2,3-saturated fatty acyl-CoA + NADP(+) = a very-long-chain (2E)-enoyl-CoA + NADPH + H(+). The enzyme catalyses octadecanoyl-CoA + NADP(+) = (2E)-octadecenoyl-CoA + NADPH + H(+). It carries out the reaction (2E,7Z,10Z,13Z,16Z)-docosapentaenoyl-CoA + NADPH + H(+) = (7Z,10Z,13Z,16Z)-docosatetraenoyl-CoA + NADP(+). The catalysed reaction is (2E,7Z,10Z,13Z,16Z,19Z)-docosahexaenoyl-CoA + NADPH + H(+) = (7Z,10Z,13Z,16Z,19Z)-docosapentaenoyl-CoA + NADP(+). It catalyses the reaction (2E,8Z,11Z,14Z)-eicosatetraenoyl-CoA + NADPH + H(+) = (8Z,11Z,14Z)-eicosatrienoyl-CoA + NADP(+). The enzyme catalyses (2E)-hexadecenoyl-CoA + NADPH + H(+) = hexadecanoyl-CoA + NADP(+). The protein operates within lipid metabolism; fatty acid biosynthesis. It functions in the pathway lipid metabolism; sphingolipid metabolism. Involved in both the production of very long-chain fatty acids for sphingolipid synthesis and the degradation of the sphingosine moiety in sphingolipids through the sphingosine 1-phosphate metabolic pathway. Catalyzes the last of the four reactions of the long-chain fatty acids elongation cycle. This endoplasmic reticulum-bound enzymatic process, allows the addition of 2 carbons to the chain of long- and very long-chain fatty acids/VLCFAs per cycle. This enzyme reduces the trans-2,3-enoyl-CoA fatty acid intermediate to an acyl-CoA that can be further elongated by entering a new cycle of elongation. Thereby, it participates in the production of VLCFAs of different chain lengths that are involved in multiple biological processes as precursors of membrane lipids and lipid mediators. Catalyzes the saturation step of the sphingosine 1-phosphate metabolic pathway, the conversion of trans-2-hexadecenoyl-CoA to palmitoyl-CoA. This chain is Very-long-chain enoyl-CoA reductase (TECR), found in Bos taurus (Bovine).